The chain runs to 470 residues: Cell division protein FtsP (470 aa).

Positions 1–29 (MKNCSRRQLLKTTLFSTALFSVPAPLLAA) form a signal peptide, tat-type signal.

This sequence belongs to the FtsP family. Post-translationally, predicted to be exported by the Tat system. The position of the signal peptide cleavage has not been experimentally proven.

Its subcellular location is the periplasm. Functionally, cell division protein that is required for growth during stress conditions. May be involved in protecting or stabilizing the divisomal assembly under conditions of stress. This Aggregatibacter aphrophilus (strain NJ8700) (Haemophilus aphrophilus) protein is Cell division protein FtsP.